Reading from the N-terminus, the 138-residue chain is Ribulose bisphosphate carboxylase small subunit (138 aa).

Belongs to the RuBisCO small chain family. As to quaternary structure, heterohexadecamer of 8 large and 8 small subunits.

It is found in the plastid. The protein resides in the chloroplast. Its function is as follows. RuBisCO catalyzes two reactions: the carboxylation of D-ribulose 1,5-bisphosphate, the primary event in carbon dioxide fixation, as well as the oxidative fragmentation of the pentose substrate in the photorespiration process. Both reactions occur simultaneously and in competition at the same active site. Although the small subunit is not catalytic it is essential for maximal activity. The chain is Ribulose bisphosphate carboxylase small subunit from Cyanidium caldarium (Red alga).